A 492-amino-acid chain; its full sequence is MWKQILSKLPKKSSSKNHSSSSSSTSKSSDNGASKSGNSQTQNAPPVKPSADSGFKEGNLKGNGNGFTPYEALPGFKDVPNAEKQNLFVRKLSLCCVVFDFSDPTKNVKEKDIKRQTLLELVDYVASPNGKFSETVIQEVVRMVSVNIFRTLNPQPRENKVIDALDLEEEEPSMDPTWPHLQLVYEILLRLIASPETDTKLAKKYIDQSFVSRLLDLFDSEDPRERDCLKTVLHRIYGKFMVHRPFIRKSINNIFYRFVFETEKHNGIAEFLEILGSIINGFALPLKDEHKVFLVRALVPLHKPKSLQMYHQQLSYCITQFVEKDCKLADTVIRGLLKSWPVTNSSKEVMFLNELEEVLEATQPPEFQRCMVPLFRQVARCLNSLHFQVAERALFLWNNDHIENLIMQNRKVILPIIFPALERNTQKHWNQAVHSLTLNVQKIFNDIDAELFKDCLAKFREDESKEAEIGAKREATWKRLEEIGNQKQKSSL.

Positions methionine 1 to asparagine 63 are disordered. The span at lysine 16–serine 39 shows a compositional bias: low complexity. The Microbody targeting signal signature appears at serine 490–leucine 492.

This sequence belongs to the phosphatase 2A regulatory subunit B56 family. PP2A consists of a common heteromeric enzyme, composed of a catalytic subunit (subunits C), a constant regulatory subunit (subunit A), and a variety of regulatory subunits such as subunits B (the R2/B/PR55/B55, R3/B''/PR72/PR130/PR59 and R5/B'/B56 families). Interacts with BZR1. Interacts with PP2A2, PP2A5 and PP2AA2. As to expression, highly expressed in dry seeds. Expressed in roots, cotyledons, rosette leaves and flowers.

Its subcellular location is the cytoplasm. The protein localises to the cytosol. It is found in the peroxisome. Its function is as follows. The B regulatory subunit may modulate substrate selectivity and catalytic activity, and may also direct the localization of the catalytic enzyme to a particular subcellular compartment. Associates with the serine/threonine-protein phosphatase PP2A catalytic subunit C and regulatory subunit A to positively regulates beta-oxidation of fatty acids and protoauxins in peroxisomes by dephosphorylating peroxisomal beta-oxidation-related proteins. Required for the formation of the PP2A holoenzyme that negatively regulates brassinosteroid signaling by dephosphorylating and inactivating BRI1 in the cytoplasm. This is Serine/threonine protein phosphatase 2A 57 kDa regulatory subunit B' theta isoform (B'THETA) from Arabidopsis thaliana (Mouse-ear cress).